The following is a 305-amino-acid chain: Pseudouridine-5'-phosphate glycosidase (305 aa).

E22 serves as the catalytic Proton donor. Substrate contacts are provided by K84 and V104. D136 is a binding site for Mn(2+). Position 138 to 140 (138 to 140) interacts with substrate; sequence SAD. K157 functions as the Nucleophile in the catalytic mechanism.

Belongs to the pseudouridine-5'-phosphate glycosidase family. In terms of assembly, homotrimer. Mn(2+) is required as a cofactor.

It catalyses the reaction D-ribose 5-phosphate + uracil = psi-UMP + H2O. Catalyzes the reversible cleavage of pseudouridine 5'-phosphate (PsiMP) to ribose 5-phosphate and uracil. Functions biologically in the cleavage direction, as part of a pseudouridine degradation pathway. The chain is Pseudouridine-5'-phosphate glycosidase from Chloroflexus aurantiacus (strain ATCC 29364 / DSM 637 / Y-400-fl).